A 1058-amino-acid chain; its full sequence is Carbamoyl phosphate synthase large chain (1058 aa).

The tract at residues 1-401 is carboxyphosphate synthetic domain; it reads MPKRTDIQKI…SLLKACRSLE (401 aa). The ATP site is built by R129, R169, G175, G176, R208, I210, E215, G241, I242, H243, Q284, and E298. Positions 133–327 constitute an ATP-grasp 1 domain; that stretch reads KQLMEELEQP…IAKLAAKIAV (195 aa). 3 residues coordinate Mg(2+): Q284, E298, and N300. The Mn(2+) site is built by Q284, E298, and N300. The segment at 402-546 is oligomerization domain; it reads IGVHHNEIPE…YSTYGWENES (145 aa). Positions 547 to 929 are carbamoyl phosphate synthetic domain; sequence IRSDKESVLV…ALYKAFEASY (383 aa). Residues 671-861 enclose the ATP-grasp 2 domain; sequence EQALKELDIP…MAQVATKLIL (191 aa). 10 residues coordinate ATP: R707, S746, I748, E752, G777, V778, H779, S780, Q820, and E832. Q820, E832, and N834 together coordinate Mg(2+). Positions 820, 832, and 834 each coordinate Mn(2+). The 129-residue stretch at 930 to 1058 folds into the MGS-like domain; it reads LHLPTFGNVV…ESRSFVTEAI (129 aa). Residues 930–1058 are allosteric domain; the sequence is LHLPTFGNVV…ESRSFVTEAI (129 aa).

This sequence belongs to the CarB family. As to quaternary structure, composed of two chains; the small (or glutamine) chain promotes the hydrolysis of glutamine to ammonia, which is used by the large (or ammonia) chain to synthesize carbamoyl phosphate. Tetramer of heterodimers (alpha,beta)4. Requires Mg(2+) as cofactor. It depends on Mn(2+) as a cofactor.

It catalyses the reaction hydrogencarbonate + L-glutamine + 2 ATP + H2O = carbamoyl phosphate + L-glutamate + 2 ADP + phosphate + 2 H(+). The catalysed reaction is hydrogencarbonate + NH4(+) + 2 ATP = carbamoyl phosphate + 2 ADP + phosphate + 2 H(+). It functions in the pathway amino-acid biosynthesis; L-arginine biosynthesis; carbamoyl phosphate from bicarbonate: step 1/1. Its pathway is pyrimidine metabolism; UMP biosynthesis via de novo pathway; (S)-dihydroorotate from bicarbonate: step 1/3. Large subunit of the glutamine-dependent carbamoyl phosphate synthetase (CPSase). CPSase catalyzes the formation of carbamoyl phosphate from the ammonia moiety of glutamine, carbonate, and phosphate donated by ATP, constituting the first step of 2 biosynthetic pathways, one leading to arginine and/or urea and the other to pyrimidine nucleotides. The large subunit (synthetase) binds the substrates ammonia (free or transferred from glutamine from the small subunit), hydrogencarbonate and ATP and carries out an ATP-coupled ligase reaction, activating hydrogencarbonate by forming carboxy phosphate which reacts with ammonia to form carbamoyl phosphate. This is Carbamoyl phosphate synthase large chain from Streptococcus pneumoniae (strain JJA).